The sequence spans 530 residues: 2,3-bisphosphoglycerate-independent phosphoglycerate mutase (530 aa).

2 residues coordinate Mn(2+): Asp-15 and Ser-65. Residue Ser-65 is the Phosphoserine intermediate of the active site. Substrate-binding positions include His-126, 155-156, Arg-187, Arg-193, 257-260, and Lys-330; these read RD and RPDR. Asp-397, His-401, Asp-438, His-439, and His-456 together coordinate Mn(2+).

Belongs to the BPG-independent phosphoglycerate mutase family. In terms of assembly, monomer. Mn(2+) serves as cofactor.

It carries out the reaction (2R)-2-phosphoglycerate = (2R)-3-phosphoglycerate. It participates in carbohydrate degradation; glycolysis; pyruvate from D-glyceraldehyde 3-phosphate: step 3/5. Its function is as follows. Catalyzes the interconversion of 2-phosphoglycerate and 3-phosphoglycerate. This Synechococcus sp. (strain JA-2-3B'a(2-13)) (Cyanobacteria bacterium Yellowstone B-Prime) protein is 2,3-bisphosphoglycerate-independent phosphoglycerate mutase.